The primary structure comprises 122 residues: uncharacterized protein (122 aa).

Basic and acidic residues predominate over residues methionine 1 to arginine 15. The interval methionine 1 to serine 49 is disordered. The span at leucine 16–proline 32 shows a compositional bias: low complexity.

This is an uncharacterized protein from Homo sapiens (Human).